The sequence spans 705 residues: Polyribonucleotide nucleotidyltransferase (705 aa).

Positions 486 and 492 each coordinate Mg(2+). Residues 553 to 612 (PRIYTMKINPEKIKDVIGKGGSVIRALTDETGTTIEIEDDGTIKIAATDGDKAKHAIRRI) enclose the KH domain. The S1 motif domain maps to 622–690 (GRIYAGKVTR…RQGRIRLSIK (69 aa)).

The protein belongs to the polyribonucleotide nucleotidyltransferase family. As to quaternary structure, component of the RNA degradosome, which is a multiprotein complex involved in RNA processing and mRNA degradation. It depends on Mg(2+) as a cofactor.

The protein localises to the cytoplasm. It carries out the reaction RNA(n+1) + phosphate = RNA(n) + a ribonucleoside 5'-diphosphate. Its function is as follows. Involved in mRNA degradation. Catalyzes the phosphorolysis of single-stranded polyribonucleotides processively in the 3'- to 5'-direction. In Yersinia pestis bv. Antiqua (strain Nepal516), this protein is Polyribonucleotide nucleotidyltransferase.